We begin with the raw amino-acid sequence, 242 residues long: Venom redulysin 2 (242 aa).

The signal sequence occupies residues 1 to 19; it reads MSKIWILLLLVGAVQFARG. A propeptide spanning residues 20–46 is cleaved from the precursor; that stretch reads FPALEEEQEDDVIDWPSFEYDLSDEER.

Belongs to the redulysin-like family. Contains 5 disulfide bonds. Expressed by the venom gland (posterior main gland) (at protein level).

The protein resides in the secreted. Its function is as follows. Highly abundant protein that may be responsible for the observed disruption of sensory neuron membranes, since it is homologous to proteins such as trialysin, which forms pores in lipid bilayers. Probable insecticidal toxin. This chain is Venom redulysin 2, found in Platymeris rhadamanthus (Red spot assassin bug).